Reading from the N-terminus, the 342-residue chain is MIKHIVSPFRTNFVGISKSVLSRMIHHKVTIIGSGPAAHTAAIYLARAEMKPTLYEGMMANGIAAGGQLTTTTDIENFPGFPESLSGSELMERMRKQSAKFGTNIITETVSKVDLSSKPFRLWTEFNEDAEPVTTDAIILATGASAKRMHLPGEETYWQQGISACAVCDGAVPIFRNKPLAVIGGGDSACEEAEFLTKYASKVYILVRKDHFRASVIMQRRIEKNPNIIVLFNTVALEAKGDGKLLNMLRIKNTKSNVENDLEVNGLFYAIGHSPATDIVKGQVDEEETGYIKTVPGSSLTSVPGFFAAGDVQDSRYRQAVTSAGSGCIAALDAERYLSAQE.

The transit peptide at 1–23 (MIKHIVSPFRTNFVGISKSVLSR) directs the protein to the mitochondrion. FAD-binding positions include 34-37 (SGPA), 56-68 (EGMMANGIAAGGQ), 63-64 (IA), glutamine 68, asparagine 77, valine 110, cysteine 168, aspartate 311, 311-320 (DVQDSRYRQA), and 318-320 (RQA). Cysteine 165 and cysteine 168 are joined by a disulfide.

The protein belongs to the class-II pyridine nucleotide-disulfide oxidoreductase family. As to quaternary structure, homodimer. It depends on FAD as a cofactor.

It is found in the mitochondrion. The enzyme catalyses [thioredoxin]-dithiol + NADP(+) = [thioredoxin]-disulfide + NADPH + H(+). Acts on mitochondrial thioredoxin 3. Implicated in the defense against oxidative stress. This is Thioredoxin reductase 2, mitochondrial from Saccharomyces cerevisiae (strain ATCC 204508 / S288c) (Baker's yeast).